The following is a 64-amino-acid chain: Conotoxin Pu5.2 (64 aa).

An N-terminal signal peptide occupies residues 1–22 (MRCVPVFVILLLLIASTPSVDA). Positions 23–52 (RPNPKDDVPLASFHGADNANRILRTLWNLR) are excised as a propeptide. An Isoleucine amide modification is found at I63.

Belongs to the conotoxin T superfamily. In terms of processing, contains 2 disulfide bonds that can be either 'C1-C3, C2-C4' or 'C1-C4, C2-C3', since these disulfide connectivities have been observed for conotoxins with cysteine framework V (for examples, see AC P0DQQ7 and AC P81755). Expressed by the venom duct.

It is found in the secreted. The protein is Conotoxin Pu5.2 of Conus pulicarius (Flea-bitten cone).